The chain runs to 158 residues: Phosphopantetheine adenylyltransferase (158 aa).

Substrate is bound at residue threonine 8. ATP is bound by residues 8-9 and histidine 16; that span reads TF. 3 residues coordinate substrate: lysine 40, leucine 72, and arginine 86. ATP is bound by residues 87 to 89, glutamate 97, and 122 to 128; these read GLR and HAFISSS.

This sequence belongs to the bacterial CoaD family. As to quaternary structure, homohexamer. Mg(2+) serves as cofactor.

Its subcellular location is the cytoplasm. The catalysed reaction is (R)-4'-phosphopantetheine + ATP + H(+) = 3'-dephospho-CoA + diphosphate. It participates in cofactor biosynthesis; coenzyme A biosynthesis; CoA from (R)-pantothenate: step 4/5. Functionally, reversibly transfers an adenylyl group from ATP to 4'-phosphopantetheine, yielding dephospho-CoA (dPCoA) and pyrophosphate. In Campylobacter jejuni subsp. jejuni serotype O:6 (strain 81116 / NCTC 11828), this protein is Phosphopantetheine adenylyltransferase.